The primary structure comprises 459 residues: ATP synthase subunit beta (459 aa).

148–155 (GGAGVGKT) serves as a coordination point for ATP.

It belongs to the ATPase alpha/beta chains family. As to quaternary structure, F-type ATPases have 2 components, CF(1) - the catalytic core - and CF(0) - the membrane proton channel. CF(1) has five subunits: alpha(3), beta(3), gamma(1), delta(1), epsilon(1). CF(0) has three main subunits: a(1), b(2) and c(9-12). The alpha and beta chains form an alternating ring which encloses part of the gamma chain. CF(1) is attached to CF(0) by a central stalk formed by the gamma and epsilon chains, while a peripheral stalk is formed by the delta and b chains.

The protein localises to the cell inner membrane. The catalysed reaction is ATP + H2O + 4 H(+)(in) = ADP + phosphate + 5 H(+)(out). Its function is as follows. Produces ATP from ADP in the presence of a proton gradient across the membrane. The catalytic sites are hosted primarily by the beta subunits. In Thioalkalivibrio sulfidiphilus (strain HL-EbGR7), this protein is ATP synthase subunit beta.